The primary structure comprises 547 residues: Cilia- and flagella- associated protein 210 (547 aa).

Coiled-coil stretches lie at residues 50 to 131 (ERIR…RKKA), 183 to 251 (VKLN…MKKN), and 342 to 405 (IARD…KADK). A disordered region spans residues 214 to 237 (KQIEEHKEEEEARKKSEEKDAEEM).

Microtubule inner protein component of sperm flagellar doublet microtubules.

The protein resides in the cytoplasm. Its subcellular location is the cytoskeleton. It is found in the cilium axoneme. It localises to the flagellum axoneme. In terms of biological role, microtubule inner protein (MIP) part of the dynein-decorated doublet microtubules (DMTs) in cilia axoneme, which is required for motile cilia beating. The protein is Cilia- and flagella- associated protein 210 (Cfap210) of Mus musculus (Mouse).